The following is a 78-amino-acid chain: Exodeoxyribonuclease 7 small subunit (78 aa).

It belongs to the XseB family. In terms of assembly, heterooligomer composed of large and small subunits.

Its subcellular location is the cytoplasm. It catalyses the reaction Exonucleolytic cleavage in either 5'- to 3'- or 3'- to 5'-direction to yield nucleoside 5'-phosphates.. Functionally, bidirectionally degrades single-stranded DNA into large acid-insoluble oligonucleotides, which are then degraded further into small acid-soluble oligonucleotides. This chain is Exodeoxyribonuclease 7 small subunit, found in Paracoccus zeaxanthinifaciens.